A 248-amino-acid polypeptide reads, in one-letter code: Adenosylcobinamide-GDP ribazoletransferase (248 aa).

Transmembrane regions (helical) follow at residues 36–56, 59–79, 114–134, 137–157, 170–190, and 199–219; these read FFLP…YLGL, FLPA…VTGG, GTIA…SLVL, YSIA…FLCL, IFIG…ILAL, and ATII…LLCL.

This sequence belongs to the CobS family. It depends on Mg(2+) as a cofactor.

Its subcellular location is the cell membrane. It carries out the reaction alpha-ribazole + adenosylcob(III)inamide-GDP = adenosylcob(III)alamin + GMP + H(+). The catalysed reaction is alpha-ribazole 5'-phosphate + adenosylcob(III)inamide-GDP = adenosylcob(III)alamin 5'-phosphate + GMP + H(+). Its pathway is cofactor biosynthesis; adenosylcobalamin biosynthesis; adenosylcobalamin from cob(II)yrinate a,c-diamide: step 7/7. Its function is as follows. Joins adenosylcobinamide-GDP and alpha-ribazole to generate adenosylcobalamin (Ado-cobalamin). Also synthesizes adenosylcobalamin 5'-phosphate from adenosylcobinamide-GDP and alpha-ribazole 5'-phosphate. This is Adenosylcobinamide-GDP ribazoletransferase from Clostridium botulinum (strain Kyoto / Type A2).